Consider the following 556-residue polypeptide: Glutamine--tRNA ligase (556 aa).

The short motif at 34–44 (PEPNGYLHIGH) is the 'HIGH' region element. Residues 35-37 (EPN) and 41-47 (HIGHAKS) each bind ATP. Asp-67 and Tyr-212 together coordinate L-glutamine. Residues Thr-231, 261-262 (RL), and 269-271 (MSK) each bind ATP. The 'KMSKS' region motif lies at 268 to 272 (VMSKR).

The protein belongs to the class-I aminoacyl-tRNA synthetase family. As to quaternary structure, monomer.

It localises to the cytoplasm. It carries out the reaction tRNA(Gln) + L-glutamine + ATP = L-glutaminyl-tRNA(Gln) + AMP + diphosphate. The chain is Glutamine--tRNA ligase from Vibrio cholerae serotype O1 (strain ATCC 39315 / El Tor Inaba N16961).